The primary structure comprises 445 residues: Argininosuccinate synthase (445 aa).

Residues 17 to 25 (AFSGGLDTS) and A43 contribute to the ATP site. Residue Y99 participates in L-citrulline binding. Residues G129 and T131 each contribute to the ATP site. T131, N135, and D136 together coordinate L-aspartate. Position 135 (N135) interacts with L-citrulline. Position 136 (D136) interacts with ATP. The L-citrulline site is built by R139 and S192. D194 contacts ATP. L-citrulline is bound by residues T201, E203, and E280.

The protein belongs to the argininosuccinate synthase family. Type 2 subfamily. In terms of assembly, homotetramer.

Its subcellular location is the cytoplasm. It carries out the reaction L-citrulline + L-aspartate + ATP = 2-(N(omega)-L-arginino)succinate + AMP + diphosphate + H(+). It functions in the pathway amino-acid biosynthesis; L-arginine biosynthesis; L-arginine from L-ornithine and carbamoyl phosphate: step 2/3. The chain is Argininosuccinate synthase from Burkholderia ambifaria (strain MC40-6).